We begin with the raw amino-acid sequence, 389 residues long: Capreomycidine synthase (389 aa).

N6-(pyridoxal phosphate)lysine is present on Lys-230.

The protein belongs to the class-II pyridoxal-phosphate-dependent aminotransferase family. Requires pyridoxal 5'-phosphate as cofactor.

It catalyses the reaction (2S,3S)-hydroxyarginine = (2S,3R)-capreomycidine + H2O. Its pathway is antibiotic biosynthesis. Its function is as follows. Involved in the biosynthesis of capreomycidine, an unusual amino acid used by non-ribosomal peptide synthases (NRPS) to make the tuberactinomycin class of peptide antibiotic such as viomycin and capreomycin. Catalyzes the dehydration of the C3 hydroxyl of (3S)-hydroxy-(2S)-arginine and the intramolecular cyclization to yield (2S,3R)-capreomycidine. The protein is Capreomycidine synthase of Streptomyces vinaceus.